We begin with the raw amino-acid sequence, 445 residues long: Fibrinogen gamma chain (445 aa).

A signal peptide spans 1 to 25; it reads MNWSLQLRSFILCWALLLLSPTGLA. An N-linked (GlcNAc...) asparagine glycan is attached at N78. In terms of domain architecture, Fibrinogen C-terminal spans 170–416; the sequence is RIHDTTGKDC…ETTMKIIPFN (247 aa). The cysteines at positions 179 and 208 are disulfide-linked. Positions 344, 346, and 350 each coordinate Ca(2+). Residues C352 and C365 are joined by a disulfide bond. Positions 400–422 are gamma-chain polymerization, binding amino end of another fibrin alpha chain; that stretch reads TRWYSMKETTMKIIPFNRLSIGD. Residue Q424 forms an Isoglutamyl lysine isopeptide (Gln-Lys) (interchain with K-432) linkage. The tract at residues 424–445 is disordered; that stretch reads QQHHMGGSKQVSVEHEVDVEYP. At S431 the chain carries Phosphoserine. Residue K432 forms an Isoglutamyl lysine isopeptide (Lys-Gln) (interchain with Q-424) linkage. Residues 435–445 show a composition bias toward basic and acidic residues; the sequence is SVEHEVDVEYP.

As to quaternary structure, heterohexamer; disulfide linked. Contains 2 sets of 3 non-identical chains (alpha, beta and gamma). The 2 heterotrimers are in head to head conformation with the N-termini in a small central domain. Post-translationally, conversion of fibrinogen to fibrin is triggered by thrombin, which cleaves fibrinopeptides A and B from alpha and beta chains, and thus exposes the N-terminal polymerization sites responsible for the formation of the soft clot. The soft clot is converted into the hard clot by factor XIIIA which catalyzes the epsilon-(gamma-glutamyl)lysine cross-linking between gamma chains (stronger) and between alpha chains (weaker) of different monomers.

It is found in the secreted. Its function is as follows. Together with fibrinogen alpha (FGA) and fibrinogen beta (FGB), polymerizes to form an insoluble fibrin matrix. Has a major function in hemostasis as one of the primary components of blood clots. In addition, functions during the early stages of wound repair to stabilize the lesion and guide cell migration during re-epithelialization. Was originally thought to be essential for platelet aggregation, based on in vitro studies using anticoagulated blood. However, subsequent studies have shown that it is not absolutely required for thrombus formation in vivo. Enhances expression of SELP in activated platelets via an ITGB3-dependent pathway. Maternal fibrinogen is essential for successful pregnancy. Fibrin deposition is also associated with infection, where it protects against IFNG-mediated hemorrhage. May also facilitate the antibacterial immune response via both innate and T-cell mediated pathways. The protein is Fibrinogen gamma chain (Fgg) of Rattus norvegicus (Rat).